Consider the following 264-residue polypeptide: DNA-binding HTH-type transcriptional repressor TrmBL2 (264 aa).

The stretch at L81–L113 forms a coiled coil.

The protein belongs to the transcriptional regulator TrmB family.

Its subcellular location is the cytoplasm. It is found in the chromosome. An abundant chromosomal protein that seems to be involved in both genome architecture and transcription repression. Incubation with DNA in vitro gives fibrous structures 14.2 +/- 2.1 nm in thickness (naked DNA is 1.83 +/- 0.37 nm); does not significantly compact DNA. Binds to both coding and non-coding regions; binding within gene promoters correlates with decreased transcript levels, while binding within coding regions does not. The chain is DNA-binding HTH-type transcriptional repressor TrmBL2 from Thermococcus kodakarensis (strain ATCC BAA-918 / JCM 12380 / KOD1) (Pyrococcus kodakaraensis (strain KOD1)).